Reading from the N-terminus, the 121-residue chain is Large ribosomal subunit protein bL12 (121 aa).

Belongs to the bacterial ribosomal protein bL12 family. In terms of assembly, homodimer. Part of the ribosomal stalk of the 50S ribosomal subunit. Forms a multimeric L10(L12)X complex, where L10 forms an elongated spine to which 2 to 4 L12 dimers bind in a sequential fashion. Binds GTP-bound translation factors.

In terms of biological role, forms part of the ribosomal stalk which helps the ribosome interact with GTP-bound translation factors. Is thus essential for accurate translation. The protein is Large ribosomal subunit protein bL12 of Shewanella baltica (strain OS223).